A 386-amino-acid polypeptide reads, in one-letter code: 2-deoxy-scyllo-inosose synthase (386 aa).

NAD(+) is bound by residues Asp42, 73–76 (EEHK), 105–109 (GVTGN), 129–130 (TT), 140–142 (SLK), and 151–152 (KN). Residue Lys142 is part of the active site. Glu184 contributes to the Co(2+) binding site. Glu244 is a catalytic residue. Positions 247 and 263 each coordinate Co(2+).

It belongs to the sugar phosphate cyclases superfamily. DOI synthase family. It depends on NAD(+) as a cofactor. The cofactor is Co(2+).

The enzyme catalyses D-glucose 6-phosphate = 2-deoxy-L-scyllo-inosose + phosphate. The protein operates within metabolic intermediate biosynthesis; 2-deoxystreptamine biosynthesis; 2-deoxystreptamine from D-glucose 6-phosphate: step 1/4. Its pathway is antibiotic biosynthesis; tobramycin biosynthesis. In terms of biological role, catalyzes the intramolecular carbocycle formation from D-glucose-6-phosphate to 2-deoxy-scyllo-inosose (DOI). This Streptoalloteichus tenebrarius (strain ATCC 17920 / DSM 40477 / JCM 4838 / CBS 697.72 / NBRC 16177 / NCIMB 11028 / NRRL B-12390 / A12253. 1 / ISP 5477) (Streptomyces tenebrarius) protein is 2-deoxy-scyllo-inosose synthase (tbmA).